Here is a 400-residue protein sequence, read N- to C-terminus: GTPase Obg (400 aa).

The region spanning 1–159 (MKFVDEVQIR…RTLKLELLLL (159 aa)) is the Obg domain. The OBG-type G domain maps to 160–333 (ADVGMLGLPN…VCYDILDLLD (174 aa)). GTP contacts are provided by residues 166–173 (GLPNAGKS), 191–195 (FTTLV), 213–216 (DIPG), 283–286 (NKMD), and 314–316 (TAI). Mg(2+)-binding residues include serine 173 and threonine 193.

The protein belongs to the TRAFAC class OBG-HflX-like GTPase superfamily. OBG GTPase family. Monomer. Mg(2+) serves as cofactor.

The protein resides in the cytoplasm. Its function is as follows. An essential GTPase which binds GTP, GDP and possibly (p)ppGpp with moderate affinity, with high nucleotide exchange rates and a fairly low GTP hydrolysis rate. Plays a role in control of the cell cycle, stress response, ribosome biogenesis and in those bacteria that undergo differentiation, in morphogenesis control. This is GTPase Obg from Aeromonas hydrophila subsp. hydrophila (strain ATCC 7966 / DSM 30187 / BCRC 13018 / CCUG 14551 / JCM 1027 / KCTC 2358 / NCIMB 9240 / NCTC 8049).